Reading from the N-terminus, the 126-residue chain is 13 kDa ribonucleoprotein-associated protein (126 aa).

The protein belongs to the eukaryotic ribosomal protein eL8 family. As to quaternary structure, component of the U3 snoRNP particle. Binds to the C'/D and B/C motifs in U3 snoRNA. Component of the 25S U4/U6.U5 tri-snRNP particle, a subcomplex of the spliceosome. Binds to the 5' stem-loop of U4 snRNA.

The protein resides in the nucleus. It is found in the nucleolus. Functionally, common component of the spliceosome and rRNA processing machinery. In association with the spliceosomal U4/U6.U5 tri-snRNP particle, required for splicing of pre-mRNA. In association with box C/D snoRNPs, required for processing of pre-ribosomal RNA (rRNA) and site-specific 2'-O-methylation of substrate RNAs. Essential for the accumulation and stability of U4 snRNA, U6 snRNA, and box C/D snoRNAs. In Debaryomyces hansenii (strain ATCC 36239 / CBS 767 / BCRC 21394 / JCM 1990 / NBRC 0083 / IGC 2968) (Yeast), this protein is 13 kDa ribonucleoprotein-associated protein (SNU13).